A 239-amino-acid polypeptide reads, in one-letter code: LexA repressor (239 aa).

The segment at residues 26–46 is a DNA-binding region (H-T-H motif); it reads FDEMKEALDLASKSGIHRLIT. The segment at 90-110 is disordered; the sequence is GSLGKTPPPPARPAPVATNDD. Active-site for autocatalytic cleavage activity residues include serine 160 and lysine 198.

This sequence belongs to the peptidase S24 family. In terms of assembly, homodimer.

The catalysed reaction is Hydrolysis of Ala-|-Gly bond in repressor LexA.. Represses a number of genes involved in the response to DNA damage (SOS response), including recA and lexA. In the presence of single-stranded DNA, RecA interacts with LexA causing an autocatalytic cleavage which disrupts the DNA-binding part of LexA, leading to derepression of the SOS regulon and eventually DNA repair. In Brucella anthropi (strain ATCC 49188 / DSM 6882 / CCUG 24695 / JCM 21032 / LMG 3331 / NBRC 15819 / NCTC 12168 / Alc 37) (Ochrobactrum anthropi), this protein is LexA repressor.